We begin with the raw amino-acid sequence, 128 residues long: Ribonuclease P protein component (128 aa).

Belongs to the RnpA family. As to quaternary structure, consists of a catalytic RNA component (M1 or rnpB) and a protein subunit.

It catalyses the reaction Endonucleolytic cleavage of RNA, removing 5'-extranucleotides from tRNA precursor.. Functionally, RNaseP catalyzes the removal of the 5'-leader sequence from pre-tRNA to produce the mature 5'-terminus. It can also cleave other RNA substrates such as 4.5S RNA. The protein component plays an auxiliary but essential role in vivo by binding to the 5'-leader sequence and broadening the substrate specificity of the ribozyme. This chain is Ribonuclease P protein component, found in Prochlorococcus marinus (strain MIT 9313).